The sequence spans 277 residues: NH(3)-dependent NAD(+) synthetase (277 aa).

46-53 (GISGGQDS) provides a ligand contact to ATP. Asp52 contacts Mg(2+). Position 142 (Arg142) interacts with deamido-NAD(+). Thr162 is an ATP binding site. Glu167 is a binding site for Mg(2+). Deamido-NAD(+) contacts are provided by Lys175 and Asp182. Residues Lys191 and Thr213 each coordinate ATP. Deamido-NAD(+) is bound at residue 263 to 264 (HK).

The protein belongs to the NAD synthetase family. As to quaternary structure, homodimer.

The enzyme catalyses deamido-NAD(+) + NH4(+) + ATP = AMP + diphosphate + NAD(+) + H(+). It functions in the pathway cofactor biosynthesis; NAD(+) biosynthesis; NAD(+) from deamido-NAD(+) (ammonia route): step 1/1. In terms of biological role, catalyzes the ATP-dependent amidation of deamido-NAD to form NAD. Uses ammonia as a nitrogen source. The polypeptide is NH(3)-dependent NAD(+) synthetase (Corynebacterium glutamicum (strain R)).